Here is a 465-residue protein sequence, read N- to C-terminus: SET domain-containing protein 3 (465 aa).

Residues 18–265 enclose the SET domain; the sequence is DKVTVKWDKK…AREELLDSYG (248 aa).

This sequence belongs to the class V-like SAM-binding methyltransferase superfamily.

The chain is SET domain-containing protein 3 (set-3) from Caenorhabditis elegans.